A 234-amino-acid polypeptide reads, in one-letter code: Large ribosomal subunit protein uL1 (234 aa).

Belongs to the universal ribosomal protein uL1 family. As to quaternary structure, part of the 50S ribosomal subunit.

Its function is as follows. Binds directly to 23S rRNA. The L1 stalk is quite mobile in the ribosome, and is involved in E site tRNA release. In terms of biological role, protein L1 is also a translational repressor protein, it controls the translation of the L11 operon by binding to its mRNA. The polypeptide is Large ribosomal subunit protein uL1 (Edwardsiella ictaluri (strain 93-146)).